Consider the following 514-residue polypeptide: Adenylosuccinate synthetase 2, chloroplastic (514 aa).

A chloroplast-targeting transit peptide spans 1-56 (MAMAAAAAVASQGLLATSSQQQKKSSAKLICNAATFFSGKRLLWVKSCNNGAVGLR). GTP-binding positions include 100–106 (GDEGKGK) and 128–130 (GHT). Aspartate 101 acts as the Proton acceptor in catalysis. Aspartate 101 and glycine 128 together coordinate Mg(2+). Residues 101-104 (DEGK), 126-129 (NAGH), threonine 218, arginine 232, glutamine 312, threonine 327, and arginine 391 each bind IMP. Histidine 129 acts as the Proton donor in catalysis. 387 to 393 (TTTGRPR) is a substrate binding site. Residues arginine 393, 419–421 (KLD), and 502–504 (GVG) each bind GTP.

The protein belongs to the adenylosuccinate synthetase family. In terms of assembly, homodimer. The cofactor is Mg(2+).

The protein localises to the plastid. Its subcellular location is the chloroplast. It catalyses the reaction IMP + L-aspartate + GTP = N(6)-(1,2-dicarboxyethyl)-AMP + GDP + phosphate + 2 H(+). It functions in the pathway purine metabolism; AMP biosynthesis via de novo pathway; AMP from IMP: step 1/2. In terms of biological role, plays an important role in the de novo pathway and in the salvage pathway of purine nucleotide biosynthesis. Catalyzes the first committed step in the biosynthesis of AMP from IMP. In Physcomitrium patens (Spreading-leaved earth moss), this protein is Adenylosuccinate synthetase 2, chloroplastic.